The sequence spans 313 residues: Transaldolase (313 aa).

Residue Lys125 is the Schiff-base intermediate with substrate of the active site.

This sequence belongs to the transaldolase family. Type 1 subfamily. In terms of assembly, homodimer.

The protein resides in the cytoplasm. It catalyses the reaction D-sedoheptulose 7-phosphate + D-glyceraldehyde 3-phosphate = D-erythrose 4-phosphate + beta-D-fructose 6-phosphate. The protein operates within carbohydrate degradation; pentose phosphate pathway; D-glyceraldehyde 3-phosphate and beta-D-fructose 6-phosphate from D-ribose 5-phosphate and D-xylulose 5-phosphate (non-oxidative stage): step 2/3. Transaldolase is important for the balance of metabolites in the pentose-phosphate pathway. This chain is Transaldolase, found in Pseudomonas syringae pv. syringae (strain B728a).